Consider the following 468-residue polypeptide: Soluble pyridine nucleotide transhydrogenase (468 aa).

An FAD-binding site is contributed by 36–45; it reads ERYKNVGGGC.

It belongs to the class-I pyridine nucleotide-disulfide oxidoreductase family. The cofactor is FAD.

The protein localises to the cytoplasm. The catalysed reaction is NAD(+) + NADPH = NADH + NADP(+). Its function is as follows. Conversion of NADPH, generated by peripheral catabolic pathways, to NADH, which can enter the respiratory chain for energy generation. In Hamiltonella defensa subsp. Acyrthosiphon pisum (strain 5AT), this protein is Soluble pyridine nucleotide transhydrogenase.